The primary structure comprises 69 residues: Small integral membrane protein 20 (69 aa).

Topologically, residues 1–8 (MAAARNLR) are mitochondrial matrix. The helical transmembrane segment at 9–29 (TALIFGGFISMVGAAFYPIYF) threads the bilayer. Residues 30 to 69 (RPLMRLEEYQKEQAVNRAGIVQEDVQPPGLKVWSDPFGRK) are Mitochondrial intermembrane-facing. Residue Phe66 is modified to Phenylalanine amide.

In terms of assembly, component of the MITRAC (mitochondrial translation regulation assembly intermediate of cytochrome c oxidase complex) complex, the core components of this complex being COA3/MITRAC12 and COX14. Interacts with COA3/MITRAC12 and COX4I1. Directly interacts with newly synthesized MT-CO1/COX1. As to expression, highly expressed in the hypothalamus, the spinal cord, and sensory ganglia (at protein level). Also expressed on in the epidermis and dermis layers of the skin (at protein level). Expressed in preadipocytes and adipocytes (at protein level). Expressed in the ovary, specifically in granulosa cells of follicles that have passed the primary stage and in oocytes (at protein level).

It is found in the mitochondrion inner membrane. The protein localises to the secreted. Its function is as follows. Component of the MITRAC (mitochondrial translation regulation assembly intermediate of cytochrome c oxidase complex) complex, that regulates cytochrome c oxidase assembly. Promotes the progression of complex assembly after the association of MT-CO1/COX1 with COX4I1 and COX6C. Chaperone-like assembly factor required to stabilize newly synthesized MT-CO1/COX1 and to prevent its premature turnover. Peptide involved in a broad spectrum of regulatory functions. Is a ligand for GPR173. As part of the reproductive cycle, it regulates gonadotropin-releasing hormone (GnRH) signaling in the hypothalamus and pituitary gland which augments the release of luteinizing hormone. More specifically, it regulates the expression of transcription factors CEBPB and POU2F1/OCT1 through the cAMP-PKA signaling pathway, which subsequently regulate the expression of GNRHR and KISS1. Plays a protective role in memory retention through activation of GNRHR. Regulates the secretion of AVP by hypothalamic neurons. Plays a role in the transduction of the itch sensation. Induces anxiolytic effects, reducing behavior associated with anxiety. Regulates food intake as well as satiation and satiety by increasing Nucb2 expression in neurons. In the ovary, it regulates follicular growth by stimulating granulosa cell proliferation by increasing the expression of GPR173, CREB1, CYP19A1, KITLG, FSHR, and LHCGR. It also increases the production of estradiol (E2). In the heart, it regulates contractility and relaxation by activating the AKT1-NOS3 and MAPK1-MAPK3 signaling pathways. It also plays a cardioprotective role during ischemia, where it activates the SAFE and RISK pathways. Stimulates the proliferation and differentiation of preadipocytes. In pancreatic islet cells, it induces proliferation of islet cells as well as the production of INS through activation of the MAPK1-MAPK3 signaling pathways. This is Small integral membrane protein 20 from Mus musculus (Mouse).